Consider the following 236-residue polypeptide: Sperm flagellar protein 1 (236 aa).

The 106-residue stretch at 7–112 folds into the Calponin-homology (CH) domain; that stretch reads EEALHQLYLW…VLIPLRQRLE (106 aa). The tract at residues 115-176 is disordered; it reads QRRRKQGAGS…PRPPAYNRAL (62 aa). Positions 183 to 236 are essential for homodimerization and microtubule bundling activity; the sequence is VLQIAEKEQELLASQETVQVLQMKVRRLEHLLQLKNVRIEDLSRRLQQAERKQR.

In terms of assembly, homodimer. Interacts with actin, TJP1, CGN and CDH1. In terms of tissue distribution, expressed in the intestinal epithelial cells (at protein level).

It localises to the cytoplasm. The protein resides in the cell projection. The protein localises to the cilium. Its subcellular location is the flagellum. It is found in the cytoskeleton. It localises to the cilium axoneme. The protein resides in the apical cell membrane. The protein localises to the basolateral cell membrane. Its subcellular location is the stress fiber. It is found in the microvillus. It localises to the lamellipodium. The protein resides in the filopodium. Microtubule-associated protein involved in the stabilization of microtubules along the axis of migration during radial intercalation. Promotes the establishment and stabilization of an axis of microtubules required for the active migration of cells into the outer epithelium. Microtubule-associated protein that promotes microtubule bundling and stabilizes microtubules against depolymerization in response to cold shock. Essential for ciliary central apparatus formation which requires both its microtubule-binding and bundling activities and for ciliary localization of HYDIN and SPAG6 in ependymal cilia. Binds actin in intestinal epithelial cells (IECs), essential for IECs survival and contributes to formation of filopodia and lamellipodia in migrating IECs. Regulates planar cell polarity signaling pathway and asymmetric microtubule accumulation in ciliated epithelia. This chain is Sperm flagellar protein 1 (SPEF1), found in Homo sapiens (Human).